We begin with the raw amino-acid sequence, 317 residues long: 17-beta-hydroxysteroid dehydrogenase type 6 (317 aa).

The N-terminal stretch at 1-17 (MWFYLVTLVGLYYLLRW) is a signal peptide. Position 33–57 (33–57 (FITGCDSGFGNLLARQLDRRGMRVL)) interacts with NAD(+). The N-linked (GlcNAc...) asparagine glycan is linked to asparagine 161. Serine 164 contributes to the substrate binding site. Tyrosine 176 (proton acceptor) is an active-site residue.

Belongs to the short-chain dehydrogenases/reductases (SDR) family. Detected in prostate, liver and kidney.

It is found in the microsome membrane. The protein resides in the endoplasmic reticulum membrane. It carries out the reaction all-trans-retinol--[retinol-binding protein] + NAD(+) = all-trans-retinal--[retinol-binding protein] + NADH + H(+). The enzyme catalyses all-trans-retinol + NAD(+) = all-trans-retinal + NADH + H(+). The catalysed reaction is androsterone + NAD(+) = 5alpha-androstan-3,17-dione + NADH + H(+). It catalyses the reaction testosterone + NAD(+) = androst-4-ene-3,17-dione + NADH + H(+). It carries out the reaction 5alpha-androstane-3alpha,17beta-diol + NAD(+) = 17beta-hydroxy-5alpha-androstan-3-one + NADH + H(+). The enzyme catalyses 17beta-estradiol + NAD(+) = estrone + NADH + H(+). The catalysed reaction is 17beta-estradiol + NADP(+) = estrone + NADPH + H(+). It catalyses the reaction 3alpha-hydroxy-5alpha-pregnan-20-one + NAD(+) = 5alpha-pregnane-3,20-dione + NADH + H(+). It carries out the reaction 5alpha-androstane-3beta,17beta-diol + NAD(+) = 17beta-hydroxy-5alpha-androstan-3-one + NADH + H(+). The enzyme catalyses 3beta-hydroxy-5alpha-androstan-17-one + NAD(+) = 5alpha-androstan-3,17-dione + NADH + H(+). Competitively inhibited by 9-cis-retinoic acid and 13-cis-retinoic acid. Functionally, NAD-dependent oxidoreductase with broad substrate specificity that shows both oxidative and reductive activity (in vitro). Has retinol dehydrogenase activity towards all-trans-retinol (in vitro). Has 17-beta-hydroxysteroid dehydrogenase activity towards various steroids (in vitro). Converts 5-alpha-androstan-3-alpha,17-beta-diol to androsterone and estradiol to estrone (in vitro). Has 3-alpha-hydroxysteroid dehydrogenase activity towards androsterone (in vitro). The polypeptide is 17-beta-hydroxysteroid dehydrogenase type 6 (Hsd17b6) (Rattus norvegicus (Rat)).